Here is a 197-residue protein sequence, read N- to C-terminus: MMTLYPVVVQERTTGEVLMLAYANEEALELTKKTGYAHFFSRERQKIWKKGETSGNTMRVVEIRRDCDDDAYLYIVDFPEDKVACHTGNRSCFFKVEHRFEETGSPTFWLELYRLVRKRKEEMPEGSYTVKLFKEGKGKIAKKFGEEAVEVITGYLQNDRENLVWEIADMMYHLTVLMADAGVTVQDVMRELEKRRK.

Residues 1–108 (MMTLYPVVVQ…RFEETGSPTF (108 aa)) are phosphoribosyl-AMP cyclohydrolase. The segment at 109 to 197 (WLELYRLVRK…VMRELEKRRK (89 aa)) is phosphoribosyl-ATP pyrophosphohydrolase.

It in the N-terminal section; belongs to the PRA-CH family. In the C-terminal section; belongs to the PRA-PH family.

The protein resides in the cytoplasm. It catalyses the reaction 1-(5-phospho-beta-D-ribosyl)-ATP + H2O = 1-(5-phospho-beta-D-ribosyl)-5'-AMP + diphosphate + H(+). The enzyme catalyses 1-(5-phospho-beta-D-ribosyl)-5'-AMP + H2O = 1-(5-phospho-beta-D-ribosyl)-5-[(5-phospho-beta-D-ribosylamino)methylideneamino]imidazole-4-carboxamide. The protein operates within amino-acid biosynthesis; L-histidine biosynthesis; L-histidine from 5-phospho-alpha-D-ribose 1-diphosphate: step 2/9. It functions in the pathway amino-acid biosynthesis; L-histidine biosynthesis; L-histidine from 5-phospho-alpha-D-ribose 1-diphosphate: step 3/9. The sequence is that of Histidine biosynthesis bifunctional protein HisIE (hisI) from Thermotoga maritima (strain ATCC 43589 / DSM 3109 / JCM 10099 / NBRC 100826 / MSB8).